Consider the following 80-residue polypeptide: Acyl carrier protein (80 aa).

A Carrier domain is found at 4 to 79 (EDIFSKVKDI…DAVDFIASKA (76 aa)). At Ser-39 the chain carries O-(pantetheine 4'-phosphoryl)serine.

The protein belongs to the acyl carrier protein (ACP) family. 4'-phosphopantetheine is transferred from CoA to a specific serine of apo-ACP by AcpS. This modification is essential for activity because fatty acids are bound in thioester linkage to the sulfhydryl of the prosthetic group.

The protein localises to the cytoplasm. It functions in the pathway lipid metabolism; fatty acid biosynthesis. Its function is as follows. Carrier of the growing fatty acid chain in fatty acid biosynthesis. This chain is Acyl carrier protein, found in Synechococcus elongatus (strain ATCC 33912 / PCC 7942 / FACHB-805) (Anacystis nidulans R2).